A 769-amino-acid polypeptide reads, in one-letter code: Scarecrow-like protein 14 (769 aa).

Disordered stretches follow at residues Met-1 to Leu-23, Pro-128 to Ser-157, Thr-279 to Asn-320, and Thr-364 to Lys-388. Residues Asn-384–Val-765 form the GRAS domain. The interval Ala-391–Gln-451 is leucine repeat I (LRI). The interval Tyr-470–Gly-536 is VHIID. Residues Ile-501 to Asp-505 carry the VHIID motif. Residues Glu-552–Asp-584 are leucine repeat II (LRII). The segment at Val-593–Asn-687 is PFYRE. The tract at residues Ala-690 to Val-765 is SAW.

This sequence belongs to the GRAS family. In terms of tissue distribution, expressed in roots, shoots, flowers and siliques.

It is found in the nucleus. Its function is as follows. Probable transcription factor involved in plant development. The chain is Scarecrow-like protein 14 (SCL14) from Arabidopsis thaliana (Mouse-ear cress).